A 90-amino-acid chain; its full sequence is DNA-directed RNA polymerase subunit omega (90 aa).

The disordered stretch occupies residues 69-90 (RQEQQEQEAAELAAVSSIAHTR).

The protein belongs to the RNA polymerase subunit omega family. As to quaternary structure, the RNAP catalytic core consists of 2 alpha, 1 beta, 1 beta' and 1 omega subunit. When a sigma factor is associated with the core the holoenzyme is formed, which can initiate transcription.

It catalyses the reaction RNA(n) + a ribonucleoside 5'-triphosphate = RNA(n+1) + diphosphate. Promotes RNA polymerase assembly. Latches the N- and C-terminal regions of the beta' subunit thereby facilitating its interaction with the beta and alpha subunits. In Vibrio atlanticus (strain LGP32) (Vibrio splendidus (strain Mel32)), this protein is DNA-directed RNA polymerase subunit omega.